The following is a 477-amino-acid chain: UDP-N-acetylmuramate--L-alanine ligase (477 aa).

112–118 is an ATP binding site; sequence GAHGKTT.

This sequence belongs to the MurCDEF family.

It is found in the cytoplasm. It catalyses the reaction UDP-N-acetyl-alpha-D-muramate + L-alanine + ATP = UDP-N-acetyl-alpha-D-muramoyl-L-alanine + ADP + phosphate + H(+). It functions in the pathway cell wall biogenesis; peptidoglycan biosynthesis. In terms of biological role, cell wall formation. This Delftia acidovorans (strain DSM 14801 / SPH-1) protein is UDP-N-acetylmuramate--L-alanine ligase.